The following is a 282-amino-acid chain: 2-dehydro-3-deoxyphosphooctonate aldolase (282 aa).

Belongs to the KdsA family.

It localises to the cytoplasm. It carries out the reaction D-arabinose 5-phosphate + phosphoenolpyruvate + H2O = 3-deoxy-alpha-D-manno-2-octulosonate-8-phosphate + phosphate. The protein operates within carbohydrate biosynthesis; 3-deoxy-D-manno-octulosonate biosynthesis; 3-deoxy-D-manno-octulosonate from D-ribulose 5-phosphate: step 2/3. Its pathway is bacterial outer membrane biogenesis; lipopolysaccharide biosynthesis. This chain is 2-dehydro-3-deoxyphosphooctonate aldolase, found in Shewanella sp. (strain W3-18-1).